A 585-amino-acid chain; its full sequence is Aspartate--tRNA ligase (585 aa).

Position 173 (glutamate 173) interacts with L-aspartate. Residues 197-200 form an aspartate region; it reads QTLK. L-aspartate is bound at residue arginine 219. Residues 219 to 221 and glutamine 228 contribute to the ATP site; that span reads RDE. Histidine 446 lines the L-aspartate pocket. ATP is bound at residue glutamate 480. L-aspartate is bound at residue arginine 487. Residue 532 to 535 coordinates ATP; that stretch reads GLDR.

The protein belongs to the class-II aminoacyl-tRNA synthetase family. Type 1 subfamily. Homodimer.

It is found in the cytoplasm. The catalysed reaction is tRNA(Asp) + L-aspartate + ATP = L-aspartyl-tRNA(Asp) + AMP + diphosphate. Its function is as follows. Catalyzes the attachment of L-aspartate to tRNA(Asp) in a two-step reaction: L-aspartate is first activated by ATP to form Asp-AMP and then transferred to the acceptor end of tRNA(Asp). This Bacteroides fragilis (strain YCH46) protein is Aspartate--tRNA ligase.